The primary structure comprises 142 residues: MESARENIDLQPGSSDPRSQPINLNHYATKKSVAESMLDVALFMSNAMRLKAVLEQGPSSHYYTTLVTLISLSLLLQVVIGVLLVVIARLNLNEVEKQWRLNQLNNAATILVFFTVVINVFITAFGAHKTGFLAARASRNPL.

The segment at 1-21 is disordered; sequence MESARENIDLQPGSSDPRSQP. At 1-60 the chain is on the extracellular side; the sequence is MESARENIDLQPGSSDPRSQPINLNHYATKKSVAESMLDVALFMSNAMRLKAVLEQGPSS. Over residues 12–21 the composition is skewed to polar residues; it reads PGSSDPRSQP. A helix alpha1 region spans residues 25-37; it reads NHYATKKSVAESM. The interval 38 to 57 is helix alpha2; that stretch reads LDVALFMSNAMRLKAVLEQG. Residues 61 to 92 traverse the membrane as a helical segment; the sequence is HYYTTLVTLISLSLLLQVVIGVLLVVIARLNL. Topologically, residues 93-96 are cytoplasmic; the sequence is NEVE. Residues 97 to 126 form a helical membrane-spanning segment; sequence KQWRLNQLNNAATILVFFTVVINVFITAFG. Residue glutamine 103 coordinates cholesterol. Residues 127–142 lie on the Extracellular side of the membrane; it reads AHKTGFLAARASRNPL.

This sequence belongs to the ninjurin family. In terms of assembly, homooligomer; in response to stimuli, homooligomerizes into filaments. In contrast to NINJ1, the filament is curved toward the intracellular space, preventing its circularization on a relatively flat membrane to mediate plasma membrane rupture: curvature is caused by cholesterol-binding at the cytoplasmic leaflet. Widely expressed. In adult, higher expression in the bone marrow and peripheral blood lymphocytes, medium in the lung, lymph node, thyroid, uterus, thymus, spleen, prostate and skeletal muscle, lower in the liver, placenta, brain, heart and kidney. In embryo, higher expression in the thymus, heart and liver, lower in the spleen, lung, brain and kidney.

It localises to the cell membrane. Its function is as follows. Its role in unclear. In contrast to NINJ1 paralog, does not mediate plasma membrane rupture (cytolysis) downstream of necroptotic and pyroptotic programmed cell death. While it is able to oligomerize and form filaments, filaments are curved toward the intracellular space, preventing circularization to mediate plasma membrane rupture. May act as a homophilic transmembrane adhesion molecule involved in nerve regeneration. Promotes axonal growth. In Homo sapiens (Human), this protein is Ninjurin-2.